The sequence spans 596 residues: Putative terpenoid synthase 5 (596 aa).

Mg(2+) is bound by residues aspartate 349, aspartate 353, asparagine 481, and aspartate 489. The short motif at 349 to 353 (DDTCD) is the DDXXD motif element.

It belongs to the terpene synthase family. Tpsa subfamily. Requires Mg(2+) as cofactor. It depends on Mn(2+) as a cofactor.

The protein resides in the cytoplasm. It functions in the pathway secondary metabolite biosynthesis; terpenoid biosynthesis. In Arabidopsis thaliana (Mouse-ear cress), this protein is Putative terpenoid synthase 5 (TPS05).